The chain runs to 78 residues: DNA import protein CedA1 (78 aa).

A run of 2 helical transmembrane segments spans residues 12–32 and 53–73; these read STVT…GWAL and AIIA…ISYI.

In terms of assembly, forms a complex composed of CedA, CedA1 and CedA2.

Its subcellular location is the cell membrane. Part of the Ced system, which is involved in DNA import. This Sulfolobus acidocaldarius (strain ATCC 33909 / DSM 639 / JCM 8929 / NBRC 15157 / NCIMB 11770) protein is DNA import protein CedA1.